The chain runs to 335 residues: RNA polymerase sigma factor RpoS (335 aa).

The sigma-70 factor domain-1 stretch occupies residues 57–90; sequence DATQMYLSEIGFSPLLTAEEEVLYARRALRGDEA. Residues 95–165 are sigma-70 factor domain-2; that stretch reads MIESNLRLVV…ERALMNQTRT (71 aa). Residues 119-122 carry the Interaction with polymerase core subunit RpoC motif; sequence DLIE. The sigma-70 factor domain-3 stretch occupies residues 175–250; that stretch reads ELNIYLRTAR…DSHNADPEFS (76 aa). Residues 263 to 316 form a sigma-70 factor domain-4 region; sequence WLDELNPKQKEVLARRFGLLGYEPSTLEEVGREINLTRERVRQIQVEGLRRLRE. A DNA-binding region (H-T-H motif) is located at residues 289-308; sequence LEEVGREINLTRERVRQIQV.

This sequence belongs to the sigma-70 factor family. RpoS subfamily. As to quaternary structure, interacts with the RNA polymerase core enzyme.

It localises to the cytoplasm. Its function is as follows. Sigma factors are initiation factors that promote the attachment of RNA polymerase to specific initiation sites and are then released. This sigma factor is the master transcriptional regulator of the stationary phase and the general stress response. May be required for the persistence of V.cholerae in aquatic habitats. This Vibrio cholerae serotype O1 (strain ATCC 39315 / El Tor Inaba N16961) protein is RNA polymerase sigma factor RpoS.